A 307-amino-acid polypeptide reads, in one-letter code: tRNA dimethylallyltransferase (307 aa).

8–15 (GPTGSGKS) lines the ATP pocket. 10–15 (TGSGKS) is a substrate binding site. Residues 33–36 (DSLQ) are interaction with substrate tRNA.

Belongs to the IPP transferase family. Monomer. Requires Mg(2+) as cofactor.

It catalyses the reaction adenosine(37) in tRNA + dimethylallyl diphosphate = N(6)-dimethylallyladenosine(37) in tRNA + diphosphate. Catalyzes the transfer of a dimethylallyl group onto the adenine at position 37 in tRNAs that read codons beginning with uridine, leading to the formation of N6-(dimethylallyl)adenosine (i(6)A). This Solibacter usitatus (strain Ellin6076) protein is tRNA dimethylallyltransferase.